A 338-amino-acid polypeptide reads, in one-letter code: GTPase Obg (338 aa).

Positions 1–159 (MKFVDSASVF…FTLDLELKLM (159 aa)) constitute an Obg domain. The tract at residues 123 to 145 (GGRGNQHFATSTHQAPRHAEPGQ) is disordered. The OBG-type G domain maps to 160 to 323 (ADVGLVGFPN…LKDALWRIIV (164 aa)). GTP is bound by residues 166-173 (GFPNAGKS), 191-195 (FTTLV), 213-216 (DIPG), 280-283 (TKMD), and 304-306 (SAV). Mg(2+) contacts are provided by S173 and T193.

It belongs to the TRAFAC class OBG-HflX-like GTPase superfamily. OBG GTPase family. As to quaternary structure, monomer. Mg(2+) serves as cofactor.

The protein localises to the cytoplasm. In terms of biological role, an essential GTPase which binds GTP, GDP and possibly (p)ppGpp with moderate affinity, with high nucleotide exchange rates and a fairly low GTP hydrolysis rate. Plays a role in control of the cell cycle, stress response, ribosome biogenesis and in those bacteria that undergo differentiation, in morphogenesis control. In Chlorobium chlorochromatii (strain CaD3), this protein is GTPase Obg.